Consider the following 195-residue polypeptide: Ribonuclease HII (195 aa).

Positions 8–195 constitute an RNase H type-2 domain; that stretch reads WGVVGVDEAG…FAPVRRLLGG (188 aa). Residues aspartate 14, glutamate 15, and aspartate 106 each contribute to the a divalent metal cation site.

This sequence belongs to the RNase HII family. Mn(2+) is required as a cofactor. Requires Mg(2+) as cofactor.

Its subcellular location is the cytoplasm. The enzyme catalyses Endonucleolytic cleavage to 5'-phosphomonoester.. Functionally, endonuclease that specifically degrades the RNA of RNA-DNA hybrids. This Halorhodospira halophila (strain DSM 244 / SL1) (Ectothiorhodospira halophila (strain DSM 244 / SL1)) protein is Ribonuclease HII.